A 268-amino-acid chain; its full sequence is Protein APE_1980.1 (268 aa).

Belongs to the CinA family.

The sequence is that of Protein APE_1980.1 from Aeropyrum pernix (strain ATCC 700893 / DSM 11879 / JCM 9820 / NBRC 100138 / K1).